Here is a 90-residue protein sequence, read N- to C-terminus: Probable Fe(2+)-trafficking protein (90 aa).

It belongs to the Fe(2+)-trafficking protein family.

Could be a mediator in iron transactions between iron acquisition and iron-requiring processes, such as synthesis and/or repair of Fe-S clusters in biosynthetic enzymes. This Cupriavidus necator (strain ATCC 17699 / DSM 428 / KCTC 22496 / NCIMB 10442 / H16 / Stanier 337) (Ralstonia eutropha) protein is Probable Fe(2+)-trafficking protein.